Consider the following 346-residue polypeptide: Sulfate/thiosulfate import ATP-binding protein CysA 1 (346 aa).

One can recognise an ABC transporter domain in the interval 3–237; that stretch reads VKVSGITKQF…PNSPFVFSFI (235 aa). 35–42 contacts ATP; that stretch reads GPSGSGKT.

It belongs to the ABC transporter superfamily. Sulfate/tungstate importer (TC 3.A.1.6) family. As to quaternary structure, the complex is composed of two ATP-binding proteins (CysA), two transmembrane proteins (CysT and CysW) and a solute-binding protein (CysP).

It localises to the cell inner membrane. The catalysed reaction is sulfate(out) + ATP + H2O = sulfate(in) + ADP + phosphate + H(+). It carries out the reaction thiosulfate(out) + ATP + H2O = thiosulfate(in) + ADP + phosphate + H(+). Its function is as follows. Part of the ABC transporter complex CysAWTP involved in sulfate/thiosulfate import. Responsible for energy coupling to the transport system. This chain is Sulfate/thiosulfate import ATP-binding protein CysA 1, found in Agrobacterium fabrum (strain C58 / ATCC 33970) (Agrobacterium tumefaciens (strain C58)).